A 183-amino-acid chain; its full sequence is Ribosome-recycling factor (183 aa).

The protein belongs to the RRF family.

Its subcellular location is the cytoplasm. Functionally, responsible for the release of ribosomes from messenger RNA at the termination of protein biosynthesis. May increase the efficiency of translation by recycling ribosomes from one round of translation to another. The chain is Ribosome-recycling factor from Treponema pallidum (strain Nichols).